Here is a 128-residue protein sequence, read N- to C-terminus: Large ribosomal subunit protein bL17 (128 aa).

It belongs to the bacterial ribosomal protein bL17 family. Part of the 50S ribosomal subunit. Contacts protein L32.

The protein is Large ribosomal subunit protein bL17 of Streptococcus sanguinis (strain SK36).